The primary structure comprises 383 residues: Hippurate hydrolase (383 aa).

The protein belongs to the peptidase M20 family.

It carries out the reaction N-benzoylglycine + H2O = benzoate + glycine. In terms of biological role, cleaves hippuric acid into benzoic acid and glycine. This chain is Hippurate hydrolase, found in Campylobacter jejuni subsp. jejuni serotype O:2 (strain ATCC 700819 / NCTC 11168).